We begin with the raw amino-acid sequence, 1034 residues long: Protein argonaute 2 (1034 aa).

Residues 1–201 (MEHERGGGGR…PMRRPDGGGS (201 aa)) are disordered. Over residues 18–125 (GGRGGGGGDG…ESGGGGGRGG (108 aa)) the composition is skewed to gly residues. A compositionally biased stretch (low complexity) spans 172-187 (VVRVQPPAPPVAVSRS). The PAZ domain occupies 391–504 (PVLDLVQKSV…VPIELCDLLE (114 aa)). Residues 688-989 (LLFCPMSDQH…AAYRGRLYYE (302 aa)) enclose the Piwi domain.

The protein belongs to the argonaute family. Ago subfamily.

In terms of biological role, probably involved in the RNA silencing pathway. May bind to short RNAs such as microRNAs (miRNAs) or short interfering RNAs (siRNAs), and represses the translation of mRNAs which are complementary to them. The protein is Protein argonaute 2 (AGO2) of Oryza sativa subsp. japonica (Rice).